A 419-amino-acid chain; its full sequence is Innexin inx5 (419 aa).

At Met-1–Asp-21 the chain is on the cytoplasmic side. The chain crosses the membrane as a helical span at residues Ser-22–Leu-42. Residues Ser-43–Tyr-162 lie on the Extracellular side of the membrane. The chain crosses the membrane as a helical span at residues Gln-163–Trp-183. Residues Lys-184 to Glu-238 are Cytoplasmic-facing. Residues Val-239–Phe-259 traverse the membrane as a helical segment. Over Trp-260–Lys-320 the chain is Extracellular. The chain crosses the membrane as a helical span at residues Ile-321 to Leu-341. The Cytoplasmic portion of the chain corresponds to Cys-342–Val-419.

It belongs to the pannexin family. As to expression, expressed in the cortex of the pupal CNS and at low levels in the wing imaginal disk.

The protein resides in the cell membrane. The protein localises to the cell junction. Its subcellular location is the gap junction. Structural component of the gap junctions. The chain is Innexin inx5 (Inx5) from Drosophila melanogaster (Fruit fly).